Reading from the N-terminus, the 693-residue chain is Heat shock protein homolog SSE1 (693 aa).

Residues 665–693 (LAEKLAAQRKAESEKKESKADAEGDVELD) form a disordered region. The span at 673 to 686 (RKAESEKKESKADA) shows a compositional bias: basic and acidic residues.

Belongs to the heat shock protein 70 family.

The protein localises to the cytoplasm. The protein is Heat shock protein homolog SSE1 (SSE1) of Lachancea kluyveri (strain ATCC 58438 / CBS 3082 / BCRC 21498 / NBRC 1685 / JCM 7257 / NCYC 543 / NRRL Y-12651) (Yeast).